The primary structure comprises 474 residues: uncharacterized protein (474 aa).

Residues M1–L11 are compositionally biased toward acidic residues. The interval M1–G163 is disordered. The segment covering F12–E25 has biased composition (basic and acidic residues). The segment covering A27 to T39 has biased composition (polar residues). A compositionally biased stretch (basic and acidic residues) spans K40–G76. The segment covering N129 to T140 has biased composition (polar residues). 2 consecutive RRM domains span residues G163–K245 and A247–P324. The tract at residues D412–R474 is disordered. Over residues P425–S434 the composition is skewed to low complexity. Residues S435–P444 are compositionally biased toward gly residues.

The protein resides in the nucleus. This is an uncharacterized protein from Schizosaccharomyces pombe (strain 972 / ATCC 24843) (Fission yeast).